Here is a 238-residue protein sequence, read N- to C-terminus: Large ribosomal subunit protein uL3 (238 aa).

It belongs to the universal ribosomal protein uL3 family. As to quaternary structure, part of the 50S ribosomal subunit. Forms a cluster with proteins L14 and L19.

Its function is as follows. One of the primary rRNA binding proteins, it binds directly near the 3'-end of the 23S rRNA, where it nucleates assembly of the 50S subunit. In Mesoplasma florum (strain ATCC 33453 / NBRC 100688 / NCTC 11704 / L1) (Acholeplasma florum), this protein is Large ribosomal subunit protein uL3.